Consider the following 280-residue polypeptide: Pantothenate synthetase (280 aa).

30–37 is a binding site for ATP; it reads MGYLHEGH. H37 acts as the Proton donor in catalysis. (R)-pantoate is bound at residue Q61. Beta-alanine is bound at residue Q61. 147-150 is a binding site for ATP; sequence GKKD. Q153 provides a ligand contact to (R)-pantoate. ATP-binding positions include V176 and 184-187; that span reads MSSR.

The protein belongs to the pantothenate synthetase family. Homodimer.

It localises to the cytoplasm. The enzyme catalyses (R)-pantoate + beta-alanine + ATP = (R)-pantothenate + AMP + diphosphate + H(+). It participates in cofactor biosynthesis; (R)-pantothenate biosynthesis; (R)-pantothenate from (R)-pantoate and beta-alanine: step 1/1. Functionally, catalyzes the condensation of pantoate with beta-alanine in an ATP-dependent reaction via a pantoyl-adenylate intermediate. In Sulfurihydrogenibium sp. (strain YO3AOP1), this protein is Pantothenate synthetase.